A 77-amino-acid chain; its full sequence is Dermatoxin-B1 (77 aa).

The N-terminal stretch at methionine 1–cysteine 22 is a signal peptide. Positions glutamate 23–glutamate 42 are excised as a propeptide. The disordered stretch occupies residues serine 24–serine 45. Positions glutamate 30–serine 40 are enriched in acidic residues. Position 76 is a glutamine amide (glutamine 76).

Belongs to the frog skin active peptide (FSAP) family. Dermatoxin subfamily. Highest expression in skin and to a lesser extent in brain and intestine.

It is found in the secreted. It localises to the target cell membrane. Its function is as follows. Possesses a potent antimicrobial activity against Gram-positive bacteria B.megaterium, C.glutamicum and S.aureus and mollicutes A.laidlawii and S.melliferum. Less active against Gram-negative bacteria B.cepacia, P.aeruginosa, S.typhimurium and S.meliloti. Probably acts by disturbing membrane functions with its amphipathic structure. The chain is Dermatoxin-B1 from Phyllomedusa bicolor (Two-colored leaf frog).